Here is a 210-residue protein sequence, read N- to C-terminus: SAP domain-containing ribonucleoprotein (210 aa).

The residue at position 2 (alanine 2) is an N-acetylalanine. Positions 8 to 42 (LHKLKLAELKQECLARGLETKGIKQDLIHRLQAYL) constitute an SAP domain. N6-acetyllysine is present on lysine 10. Residues 45 to 64 (HAEEEANEEDVLGDETEEEE) are compositionally biased toward acidic residues. The tract at residues 45-86 (HAEEEANEEDVLGDETEEEETKPIELPVKEEEPPEKTVDVAA) is disordered. Residues 65-86 (TKPIELPVKEEEPPEKTVDVAA) show a composition bias toward basic and acidic residues. N6-acetyllysine is present on lysine 142. The interval 161–210 (VSSISRKSEDDEKLKKRKERFGIVTSSAGTGTTEDTEAKKRKRAERFGIA) is disordered. Phosphoserine is present on serine 163. Residues 184–193 (VTSSAGTGTT) show a composition bias toward polar residues.

The protein belongs to the SAP domain-containing ribonucleoprotein family. Interacts with DDX39A. Interacts with FUS. Interacts (via the C-terminal domain) with DDX39B; the interaction is direct and facilitates RNA binding of DDX39B. Component of the transcription/export (TREX) complex at least composed of ALYREF/THOC4, DDX39B, SARNP/CIP29, CHTOP and the THO subcomplex; TREX seems to have dynamic structure involving ATP-dependent remodeling; in the complex interacts directly with DDX39B in a ATP-dependent manner which bridges it to ALYREF/THOC4. Low expression in spleen, liver, pancreas, testis, thymus, heart, and kidney. Increased levels are seen in hepatocellular carcinoma and pancreatic adenocarcinoma.

Its subcellular location is the nucleus. It localises to the nucleus speckle. Its function is as follows. Binds both single-stranded and double-stranded DNA with higher affinity for the single-stranded form. Specifically binds to scaffold/matrix attachment region DNA. Also binds single-stranded RNA. Enhances RNA unwinding activity of DDX39A. May participate in important transcriptional or translational control of cell growth, metabolism and carcinogenesis. Component of the TREX complex which is thought to couple mRNA transcription, processing and nuclear export, and specifically associates with spliced mRNA and not with unspliced pre-mRNA. The TREX complex is recruited to spliced mRNAs by a transcription-independent mechanism, binds to mRNA upstream of the exon-junction complex (EJC) and is recruited in a splicing- and cap-dependent manner to a region near the 5' end of the mRNA where it functions in mRNA export to the cytoplasm via the TAP/NXF1 pathway. Associates with DDX39B, which facilitates RNA binding of DDX39B and likely plays a role in mRNA export. The chain is SAP domain-containing ribonucleoprotein (SARNP) from Homo sapiens (Human).